The following is a 241-amino-acid chain: Superantigen-like protein 13 (241 aa).

The signal sequence occupies residues 1 to 26; that stretch reads MNNNITKKIILSTTLLLLGTASTQFP.

This sequence belongs to the staphylococcal/streptococcal toxin family. Interacts with host FPR2; this interaction promotes neutrophil chemotaxis.

Functionally, acts as a pathogen alarming molecule by acting on host neutrophil chemotactic factors FPR2. Plays a role of chemoattractant and induces degranulation and oxidative burst in neutrophils. This is Superantigen-like protein 13 from Staphylococcus aureus (strain Newman).